The chain runs to 601 residues: 3-hydroxy-3-methylglutaryl-coenzyme A reductase (601 aa).

Residues 1–34 (MDSRRRSPTVTAKAAAGELPLAPHEGQNQQPSIP) form a disordered region. Transmembrane regions (helical) follow at residues 36–58 (SSDV…FFSV) and 86–106 (ALAS…LDFV). The interval 107-179 (QSLIYKPNNE…PLITPQNSEE (73 aa)) is linker. Residues 180–601 (DEDIIKAVVA…IASSQLESDS (422 aa)) form a catalytic region. Catalysis depends on glutamate 273, which acts as the Charge relay system. N-linked (GlcNAc...) asparagine glycosylation occurs at asparagine 337. Residues lysine 405 and aspartate 481 each act as charge relay system in the active site. Histidine 579 (proton donor) is an active-site residue. N-linked (GlcNAc...) asparagine glycosylation is present at asparagine 583.

Belongs to the HMG-CoA reductase family.

It localises to the endoplasmic reticulum membrane. It catalyses the reaction (R)-mevalonate + 2 NADP(+) + CoA = (3S)-3-hydroxy-3-methylglutaryl-CoA + 2 NADPH + 2 H(+). It functions in the pathway metabolic intermediate biosynthesis; (R)-mevalonate biosynthesis; (R)-mevalonate from acetyl-CoA: step 3/3. Functionally, catalyzes the synthesis of mevalonate. The specific precursor of all isoprenoid compounds present in plants. This chain is 3-hydroxy-3-methylglutaryl-coenzyme A reductase (HMGR), found in Catharanthus roseus (Madagascar periwinkle).